Here is a 202-residue protein sequence, read N- to C-terminus: Thymidylate kinase (202 aa).

7–14 (GIDGSGKT) contacts ATP.

The protein belongs to the thymidylate kinase family.

It catalyses the reaction dTMP + ATP = dTDP + ADP. Its function is as follows. Phosphorylation of dTMP to form dTDP in both de novo and salvage pathways of dTTP synthesis. The polypeptide is Thymidylate kinase (Ehrlichia canis (strain Jake)).